A 669-amino-acid chain; its full sequence is DNA ligase (669 aa).

Residues 35-39 (DSEYD), 84-85 (SL), and E114 each bind NAD(+). The active-site N6-AMP-lysine intermediate is K116. Positions 137, 171, 287, and 311 each coordinate NAD(+). 4 residues coordinate Zn(2+): C405, C408, C423, and C428. The BRCT domain occupies 591–669 (DSDSYFAGKT…EAQLLGELKK (79 aa)).

Belongs to the NAD-dependent DNA ligase family. LigA subfamily. The cofactor is Mg(2+). Mn(2+) is required as a cofactor.

The enzyme catalyses NAD(+) + (deoxyribonucleotide)n-3'-hydroxyl + 5'-phospho-(deoxyribonucleotide)m = (deoxyribonucleotide)n+m + AMP + beta-nicotinamide D-nucleotide.. Its function is as follows. DNA ligase that catalyzes the formation of phosphodiester linkages between 5'-phosphoryl and 3'-hydroxyl groups in double-stranded DNA using NAD as a coenzyme and as the energy source for the reaction. It is essential for DNA replication and repair of damaged DNA. The protein is DNA ligase of Bacillus velezensis (strain DSM 23117 / BGSC 10A6 / LMG 26770 / FZB42) (Bacillus amyloliquefaciens subsp. plantarum).